The sequence spans 214 residues: Glycerol-3-phosphate acyltransferase (214 aa).

A run of 5 helical transmembrane segments spans residues 4 to 24 (LIVA…IVSA), 52 to 72 (AAIL…WFVV), 82 to 102 (DTSV…PAFF), 118 to 138 (LAIN…VAFF), and 159 to 179 (FLFG…LLVW).

The protein belongs to the PlsY family. Probably interacts with PlsX.

It is found in the cell inner membrane. It carries out the reaction an acyl phosphate + sn-glycerol 3-phosphate = a 1-acyl-sn-glycero-3-phosphate + phosphate. The protein operates within lipid metabolism; phospholipid metabolism. Functionally, catalyzes the transfer of an acyl group from acyl-phosphate (acyl-PO(4)) to glycerol-3-phosphate (G3P) to form lysophosphatidic acid (LPA). This enzyme utilizes acyl-phosphate as fatty acyl donor, but not acyl-CoA or acyl-ACP. This chain is Glycerol-3-phosphate acyltransferase, found in Paraburkholderia xenovorans (strain LB400).